A 122-amino-acid polypeptide reads, in one-letter code: Serum amyloid A-3 protein (122 aa).

The first 18 residues, 1 to 18, serve as a signal peptide directing secretion; that stretch reads MKPFLAIIFCFLILGVDS. A disordered region spans residues 100 to 122; the sequence is ANKWGRSGKDPNHFRPAGLPSKY.

It belongs to the SAA family. In terms of tissue distribution, expressed by the liver; secreted in plasma.

The protein resides in the secreted. In terms of biological role, major acute phase reactant. Apolipoprotein of the HDL complex. In vitro exhibits antimicrobial activity against Escherichia coli, Streptococcus uberis and Pseudomonas aeruginosa. This chain is Serum amyloid A-3 protein (SAA3), found in Mesocricetus auratus (Golden hamster).